A 326-amino-acid polypeptide reads, in one-letter code: Biotin synthase (326 aa).

The Radical SAM core domain occupies 51–275; it reads NAVQRSTLLS…MMPTSFVRLS (225 aa). [4Fe-4S] cluster is bound by residues Cys66, Cys70, and Cys73. 4 residues coordinate [2Fe-2S] cluster: Cys110, Cys141, Cys201, and Arg273.

The protein belongs to the radical SAM superfamily. Biotin synthase family. As to quaternary structure, homodimer. [4Fe-4S] cluster is required as a cofactor. The cofactor is [2Fe-2S] cluster.

The enzyme catalyses (4R,5S)-dethiobiotin + (sulfur carrier)-SH + 2 reduced [2Fe-2S]-[ferredoxin] + 2 S-adenosyl-L-methionine = (sulfur carrier)-H + biotin + 2 5'-deoxyadenosine + 2 L-methionine + 2 oxidized [2Fe-2S]-[ferredoxin]. The protein operates within cofactor biosynthesis; biotin biosynthesis; biotin from 7,8-diaminononanoate: step 2/2. In terms of biological role, catalyzes the conversion of dethiobiotin (DTB) to biotin by the insertion of a sulfur atom into dethiobiotin via a radical-based mechanism. The sequence is that of Biotin synthase from Aromatoleum aromaticum (strain DSM 19018 / LMG 30748 / EbN1) (Azoarcus sp. (strain EbN1)).